The sequence spans 103 residues: Large ribosomal subunit protein uL23 (103 aa).

The protein belongs to the universal ribosomal protein uL23 family. Part of the 50S ribosomal subunit. Contacts protein L29, and trigger factor when it is bound to the ribosome.

In terms of biological role, one of the early assembly proteins it binds 23S rRNA. One of the proteins that surrounds the polypeptide exit tunnel on the outside of the ribosome. Forms the main docking site for trigger factor binding to the ribosome. In Chlorobium phaeovibrioides (strain DSM 265 / 1930) (Prosthecochloris vibrioformis (strain DSM 265)), this protein is Large ribosomal subunit protein uL23.